Consider the following 883-residue polypeptide: Phosphoenolpyruvate carboxylase (883 aa).

Catalysis depends on residues His-138 and Lys-546.

It belongs to the PEPCase type 1 family. As to quaternary structure, homotetramer. Mg(2+) is required as a cofactor.

The enzyme catalyses oxaloacetate + phosphate = phosphoenolpyruvate + hydrogencarbonate. The enzyme has distinct binding sites for each of the allosteric effectors such as acetyl-CoA, fructose 1,6-bisphosphate, guanosine 3'-diphosphate 5'-diphosphate, long chain fatty acids, and L-aspartate. Forms oxaloacetate, a four-carbon dicarboxylic acid source for the tricarboxylic acid cycle. The protein is Phosphoenolpyruvate carboxylase (ppc) of Salmonella typhi.